We begin with the raw amino-acid sequence, 616 residues long: Secretogranin-2 (616 aa).

The signal sequence occupies residues 1 to 27 (MAEAKTHWLGASLSLILLIFLLATAEA). Residues 28–30 (ASF) constitute a propeptide that is removed on maturation. 2 disordered regions span residues 68–104 (QAHK…RDSL) and 120–146 (AENE…PMDM). Basic and acidic residues predominate over residues 92–104 (ENSDLPESSRDSL). Polar residues predominate over residues 122-140 (NEPQSSLKENKPYTLNSEK). Tyr150 bears the Sulfotyrosine mark. Phosphoserine is present on residues Ser173, Ser267, Ser431, Ser531, Ser554, and Ser555. Over residues 255–283 (KIESQTQEEVRDSKENIEKNEQINDEMKR) the composition is skewed to basic and acidic residues. Residues 255–290 (KIESQTQEEVRDSKENIEKNEQINDEMKRSGQMGLQ) form a disordered region. A compositionally biased stretch (basic and acidic residues) spans 548–560 (ERLNQHSSQETDK). The tract at residues 548–582 (ERLNQHSSQETDKLALVSKRLPVATPKSDDAPNRQ) is disordered.

Belongs to the chromogranin/secretogranin protein family. As to quaternary structure, interacts with Secretogranin III/SCG3.

The protein localises to the secreted. Its function is as follows. Neuroendocrine protein of the granin family that regulates the biogenesis of secretory granules. The polypeptide is Secretogranin-2 (SCG2) (Sus scrofa (Pig)).